We begin with the raw amino-acid sequence, 202 residues long: 3-isopropylmalate dehydratase small subunit (202 aa).

The protein belongs to the LeuD family. LeuD type 1 subfamily. In terms of assembly, heterodimer of LeuC and LeuD.

It catalyses the reaction (2R,3S)-3-isopropylmalate = (2S)-2-isopropylmalate. It functions in the pathway amino-acid biosynthesis; L-leucine biosynthesis; L-leucine from 3-methyl-2-oxobutanoate: step 2/4. Its function is as follows. Catalyzes the isomerization between 2-isopropylmalate and 3-isopropylmalate, via the formation of 2-isopropylmaleate. The chain is 3-isopropylmalate dehydratase small subunit from Rhizobium etli (strain ATCC 51251 / DSM 11541 / JCM 21823 / NBRC 15573 / CFN 42).